The primary structure comprises 404 residues: Intracellular hyaluronan-binding protein 4.L (404 aa).

3 disordered regions span residues Met-1–Asn-21, Leu-51–Ser-288, and Leu-359–Ala-379. Positions Glu-8 to Gln-19 are enriched in polar residues. 3 stretches are compositionally biased toward basic and acidic residues: residues Gly-71–Ala-81, Lys-145–Arg-159, and Arg-165–Met-184. Residues Gly-188–Gly-200 are compositionally biased toward gly residues. Composition is skewed to basic and acidic residues over residues Thr-205–Gly-233 and Glu-270–Glu-281.

It belongs to the SERBP1-HABP4 family. Associates with ribosomes; promoting ribosome stabilization. Interacts with eef2/eEF2; promoting ribosome stabilization.

It is found in the nucleus. The protein resides in the cytoplasm. Its subcellular location is the stress granule. The protein localises to the nucleolus. It localises to the nucleus speckle. It is found in the cajal body. Its function is as follows. Ribosome-binding protein that promotes ribosome hibernation, a process during which ribosomes are stabilized in an inactive state and preserved from proteasomal degradation. Acts via its association with eef2/eEF2 factor at the A-site of the ribosome, promoting ribosome stabilization in an inactive state compatible with storage. Plays a key role in ribosome hibernation in the mature egg by promoting ribosome stabilization. Ribosomes, which are produced in large quantities during oogenesis, are stored and translationally repressed in the egg and early embryo. The protein is Intracellular hyaluronan-binding protein 4.L of Xenopus laevis (African clawed frog).